The following is a 472-amino-acid chain: Envelope glycoprotein O (472 aa).

Positions 1–31 (MGKKEMIMVKGIPKIMLLISITFLLLSLINC) are cleaved as a signal peptide. 15 N-linked (GlcNAc...) asparagine; by host glycosylation sites follow: Asn-109, Asn-136, Asn-163, Asn-168, Asn-177, Asn-225, Asn-248, Asn-294, Asn-298, Asn-356, Asn-391, Asn-398, Asn-405, Asn-439, and Asn-460.

Belongs to the herpesviridae U47 family. Forms the envelope trimer complex composed of gH, gL, and gO. The trimer interacts with host PDGFRA. N-glycosylated. In terms of processing, the N-terminus is blocked.

The protein resides in the virion membrane. Its function is as follows. Plays a role in viral entry into host cells. Forms a trimeric complex at the surface of the viral envelope together with gH and gL. This complex is required for entry in host fibroblasts. Mechanistically, engages host receptor(s) including PDGFRA to mediate infection. The polypeptide is Envelope glycoprotein O (UL74) (Human cytomegalovirus (strain Merlin) (HHV-5)).